Here is a 1135-residue protein sequence, read N- to C-terminus: WASH complex subunit 4 (1135 aa).

A2 carries the N-acetylalanine modification.

This sequence belongs to the SWIP family. As to quaternary structure, probable component of the WASH complex.

The protein is WASH complex subunit 4 of Dictyostelium discoideum (Social amoeba).